Reading from the N-terminus, the 1367-residue chain is MAP3K epsilon protein kinase 2 (1367 aa).

The Protein kinase domain maps to 20-274 (YMLGDEIGKG…AKTLLSHPWI (255 aa)). HEAT repeat units lie at residues 25-62 (EIGKGAYGRVYIGLDLENGDFVAIKQVSLENIGQEDLN) and 86-125 (LKTKTHLHIILEYVENGSLANIIKPNKFGPFPESLVTVYI). Residues 26-34 (IGKGAYGRV) and K49 each bind ATP. D144 functions as the Proton acceptor in the catalytic mechanism. The stretch at 218–256 (PYYDLQPMPALYRIVQDDTPPIPDSLSPDITDFLRLCFK) is one HEAT 3 repeat. Disordered regions lie at residues 285 to 422 (LRHS…GRRN) and 437 to 513 (SSHS…VADG). Positions 293-306 (YMKETDSSSEKDAE) are enriched in basic and acidic residues. The span at 351-363 (LGEEGTDSEDDIN) shows a compositional bias: acidic residues. A compositionally biased stretch (polar residues) spans 378–396 (RQSGTCSISSDAKGTSQDV). Basic and acidic residues-rich tracts occupy residues 397-408 (LENHEKYDRDEI) and 475-491 (SLHDLFHPLDKVPEGKT). Polar residues predominate over residues 492–507 (NEASTSTPTANVNQGD). HEAT repeat units follow at residues 538-576 (SQDGGDLFRLMMGVLKDDVLNIDDLVFDEKVPPENLFPL), 577-614 (QAVEFSRLVSSLRPDESEDAIVTSSLKLVAMFRQRPGQ), 633-658 (IPKSRVICAVLQLINEIVKDNTDFLE), 659-700 (NACL…SSPL), and 704-742 (MFISCRGIPVLVGFLEADYAKHREMVHLAIDGMWQVFKL). The tract at residues 792–860 (PRARSGQLDP…LHPDGDRPRL (69 aa)) is disordered. Polar residues-rich tracts occupy residues 799 to 814 (LDPNNPIFSQRETSPS) and 835 to 845 (ALTSNSQSSDV). Positions 846-859 (HQPDALHPDGDRPR) are enriched in basic and acidic residues. HEAT repeat units follow at residues 850–888 (ALHPDGDRPRLSSVVADATEDVIQQHRISLSANRTSTDK), 906–943 (DQVRPLLSLLEKEPPSRKISGQLDYVKHIAGIERHESR), 1045–1066 (DYLEKVADLLLEFARAETTVKS), 1067–1105 (YMCSQSLLSRLFQMFNRVEPPILLKILECTNHLSTDPNC), 1112–1150 (ADAIKQLIPNLELKEGPLVYQIHHEVLSALFNLCKINKR), 1154–1191 (QAAENGIIPHLMLFVMSDSPLKQYALPLLCDMAHASRN), 1196–1236 (LRAH…KVEQ), 1257–1280 (RHFVHILEPFLKIITKSSSINKTL), 1281–1317 (ALNGLTPLLIARLDHQDAIARLNLLKLIKAVYEKHPK), and 1347–1367 (QVLVKQMATSLLKALHINTIL).

Belongs to the protein kinase superfamily. Ser/Thr protein kinase family. Autophosphorylated. Expressed in both the sporophytic and the gametophytic tissues, especially in dividing cells. Mostly present in flower buds and mature flowers. Also accumulates in embryos and in roots.

It localises to the cytoplasm. The protein resides in the cytoskeleton. Its subcellular location is the microtubule organizing center. It is found in the nucleus. The protein localises to the nucleolus. It localises to the cell membrane. The catalysed reaction is L-seryl-[protein] + ATP = O-phospho-L-seryl-[protein] + ADP + H(+). It catalyses the reaction L-threonyl-[protein] + ATP = O-phospho-L-threonyl-[protein] + ADP + H(+). Its function is as follows. Serine/threonine-protein kinase involved in the spatial and temporal control system organizing cortical activities in mitotic and postmitotic cells. Required for the normal functioning of the plasma membrane in developing pollen. Involved in the regulation of cell expansion and embryo development. The chain is MAP3K epsilon protein kinase 2 from Arabidopsis thaliana (Mouse-ear cress).